Here is a 103-residue protein sequence, read N- to C-terminus: Phosphoribosyl-ATP pyrophosphatase (103 aa).

Belongs to the PRA-PH family.

The protein resides in the cytoplasm. It carries out the reaction 1-(5-phospho-beta-D-ribosyl)-ATP + H2O = 1-(5-phospho-beta-D-ribosyl)-5'-AMP + diphosphate + H(+). It participates in amino-acid biosynthesis; L-histidine biosynthesis; L-histidine from 5-phospho-alpha-D-ribose 1-diphosphate: step 2/9. The sequence is that of Phosphoribosyl-ATP pyrophosphatase from Listeria monocytogenes serotype 4a (strain HCC23).